A 192-amino-acid chain; its full sequence is MKIGVLGIQGDIQEHLRMIEKTGNEPLWVKSTSELAEVSGLIMPGGESTTMIRLMKKYELWDALREAIASGLPVYATCAGMILLAREIINYPEQETLGVLDIAVERNGYGRQVASFETDLEIPAIGDTPFRAIFIRAPIIEKCGDSVEVLSTYKEKPVLVKQGKILASSFHPELTDDLRIHEYFVKEIIGKE.

Residue 46 to 48 (GES) coordinates L-glutamine. Cysteine 78 (nucleophile) is an active-site residue. L-glutamine contacts are provided by residues arginine 106 and 135-136 (IR). Catalysis depends on charge relay system residues histidine 171 and glutamate 173.

Belongs to the glutaminase PdxT/SNO family. In terms of assembly, in the presence of PdxS, forms a dodecamer of heterodimers. Only shows activity in the heterodimer.

The catalysed reaction is aldehydo-D-ribose 5-phosphate + D-glyceraldehyde 3-phosphate + L-glutamine = pyridoxal 5'-phosphate + L-glutamate + phosphate + 3 H2O + H(+). The enzyme catalyses L-glutamine + H2O = L-glutamate + NH4(+). It participates in cofactor biosynthesis; pyridoxal 5'-phosphate biosynthesis. Its function is as follows. Catalyzes the hydrolysis of glutamine to glutamate and ammonia as part of the biosynthesis of pyridoxal 5'-phosphate. The resulting ammonia molecule is channeled to the active site of PdxS. This chain is Pyridoxal 5'-phosphate synthase subunit PdxT, found in Kosmotoga olearia (strain ATCC BAA-1733 / DSM 21960 / TBF 19.5.1).